Here is a 502-residue protein sequence, read N- to C-terminus: Probable cytosol aminopeptidase (502 aa).

Mn(2+) contacts are provided by Lys-269 and Asp-274. Lys-281 is an active-site residue. Residues Asp-292, Asp-351, and Glu-353 each coordinate Mn(2+). Residue Arg-355 is part of the active site.

The protein belongs to the peptidase M17 family. It depends on Mn(2+) as a cofactor.

It is found in the cytoplasm. It catalyses the reaction Release of an N-terminal amino acid, Xaa-|-Yaa-, in which Xaa is preferably Leu, but may be other amino acids including Pro although not Arg or Lys, and Yaa may be Pro. Amino acid amides and methyl esters are also readily hydrolyzed, but rates on arylamides are exceedingly low.. The enzyme catalyses Release of an N-terminal amino acid, preferentially leucine, but not glutamic or aspartic acids.. Functionally, presumably involved in the processing and regular turnover of intracellular proteins. Catalyzes the removal of unsubstituted N-terminal amino acids from various peptides. The chain is Probable cytosol aminopeptidase from Shewanella denitrificans (strain OS217 / ATCC BAA-1090 / DSM 15013).